The following is a 515-amino-acid chain: Maturase K (515 aa).

This sequence belongs to the intron maturase 2 family. MatK subfamily.

It localises to the plastid. The protein localises to the chloroplast. Usually encoded in the trnK tRNA gene intron. Probably assists in splicing its own and other chloroplast group II introns. This Pinus coulteri (Coulter pine) protein is Maturase K.